The primary structure comprises 120 residues: NAD(P)H-quinone oxidoreductase subunit 3, chloroplastic (120 aa).

A run of 3 helical transmembrane segments spans residues 9-29, 64-84, and 88-108; these read IFWA…FISG, MFAL…PWAM, and VLGV…ILGL.

Belongs to the complex I subunit 3 family. As to quaternary structure, NDH is composed of at least 16 different subunits, 5 of which are encoded in the nucleus.

The protein resides in the plastid. It is found in the chloroplast thylakoid membrane. It catalyses the reaction a plastoquinone + NADH + (n+1) H(+)(in) = a plastoquinol + NAD(+) + n H(+)(out). The catalysed reaction is a plastoquinone + NADPH + (n+1) H(+)(in) = a plastoquinol + NADP(+) + n H(+)(out). In terms of biological role, NDH shuttles electrons from NAD(P)H:plastoquinone, via FMN and iron-sulfur (Fe-S) centers, to quinones in the photosynthetic chain and possibly in a chloroplast respiratory chain. The immediate electron acceptor for the enzyme in this species is believed to be plastoquinone. Couples the redox reaction to proton translocation, and thus conserves the redox energy in a proton gradient. This is NAD(P)H-quinone oxidoreductase subunit 3, chloroplastic from Barbarea verna (Land cress).